We begin with the raw amino-acid sequence, 772 residues long: Angiomotin-like protein 2 (772 aa).

Disordered stretches follow at residues 41 to 158 (GGAG…HVRS), 170 to 239 (RNGA…SPHF), and 260 to 299 (QYQY…PSAQ). Basic and acidic residues-rich tracts occupy residues 80-91 (QGGETHLAENRL), 100-112 (KGEE…EAKA), and 142-153 (RRQDEALRELRH). Positions 101–303 (GEELPTYEEA…GPPSAQATLG (203 aa)) are required for interaction with CDH5. Y107 carries the post-translational modification Phosphotyrosine; by FGFR1. The segment covering 178-191 (HMSSSHSFPQLARS) has biased composition (polar residues). Residues 197–214 (PRGPPAEGPEPRGPPPQY) are compositionally biased toward pro residues. The tract at residues 221–303 (QETAAVTDPR…GPPSAQATLG (83 aa)) is required for interaction with CDH1. Residues 305–578 (AHLAQMETVL…KYLEERAMRQ (274 aa)) are a coiled coil. Glycyl lysine isopeptide (Lys-Gly) (interchain with G-Cter in ubiquitin) cross-links involve residues K343 and K404. 2 disordered regions span residues 596–615 (IRHS…LLPG) and 680–752 (GLVS…RTPS). Basic and acidic residues predominate over residues 686-699 (RQTDARPAGDRVPA). The span at 718 to 733 (DGSTQTDGPADNTSAC) shows a compositional bias: polar residues. Phosphoserine is present on residues S752 and S755. The short motif at 769–772 (EILI) is the PDZ-binding element.

It belongs to the angiomotin family. Part of a complex composed of AMOTL2, MAGI1 and CDH5, within the complex AMOTL2 acts as a scaffold protein for the interaction of MAGI1 with CDH5. The complex is required for coupling actin fibers to cell junctions in endothelial cells. Within the complex AMOTL2 (via its N-terminus) interacts with CDH5. Interacts (via N-terminus) with MAGI1. Interacts (via N-terminus) with ACTB; the interaction facilitates binding of cell junction complexes to actin fibers in endothelial cells. Interacts with CDH1; the interaction may facilitate binding of radial actin fibers to cell junction complexes. Interacts with SRC. Interacts with YAP1; the interaction is required for ubiquitination of AMOTL2 and localization of YAP1 to tight junctions. Interacts with WWP1; the interaction facilitates WWP1 interaction with the Crumbs complex and subsequent WWP1 translocation to the plasma membrane. WWP1 interaction with the Crumbs complex promotes WWP1 monoubiquitination of AMOTL2 which subsequently activates the Hippo signaling pathway. When ubiquitinated interacts with LATS2 (via UBA domain); the interaction promotes LATS2 phosphorylation of YAP1. Interacts (via PPXY motif) with WWTR1/TAZ (via WW domain); the interaction promotes WWTR1/TAZ localization to the cytoplasm and thereby inhibition of its transcriptional properties. Interacts with PHLDB2; interaction may facilitate PHLDB2 localization to the myotube podosome cortex that surrounds the core. Phosphorylation at Tyr-107 is necessary for efficient binding to SRC and synergistically functioning with SRC to activate the downstream MAPK pathway. Post-translationally, monoubiquitinated at Lys-343 and Lys-404 by Crumbs complex-bound WWP1. De-ubiquitinated at Lys-343 and Lys-404 by USP9X; the interaction may be promoted by cell contact inhibition. Deubiquitination of AMOTL2 negatively regulates Hippo signaling activation. Expressed in skeletal muscle at neuromuscular junctions (at protein level).

The protein resides in the recycling endosome. It is found in the cytoplasm. The protein localises to the cell projection. Its subcellular location is the podosome. It localises to the cell junction. Regulates the translocation of phosphorylated SRC to peripheral cell-matrix adhesion sites. Required for proper architecture of actin filaments. Plays a role in coupling actin fibers to cell junctions in endothelial cells and is therefore required for correct endothelial cell morphology via facilitating transcellular transmission of mechanical force resulting in endothelial cell elongation. Required for the anchoring of radial actin fibers to CDH1 junction complexes at the cell membrane which facilitates organization of radial actin fiber structure and cellular response to contractile forces. This contributes to maintenance of cell area, size, shape, epithelial sheet organization and trophectoderm cell properties that facilitate blastocyst zona hatching. Inhibits the Wnt/beta-catenin signaling pathway, probably by recruiting CTNNB1 to recycling endosomes and hence preventing its translocation to the nucleus. Participates in angiogenesis. Activates the Hippo signaling pathway in response to cell contact inhibition via interaction with and ubiquitination by Crumbs complex-bound WWP1. Ubiquitinated AMOTL2 then interacts with LATS2 which in turn phosphorylates YAP1, excluding it from the nucleus and localizing it to the cytoplasm and tight junctions, therefore ultimately repressing YAP1-driven transcription of target genes. Acts to inhibit WWTR1/TAZ transcriptional coactivator activity via sequestering WWTR1/TAZ in the cytoplasm and at tight junctions. Regulates the size and protein composition of the podosome cortex and core at myofibril neuromuscular junctions. Selectively promotes FGF-induced MAPK activation through SRC. May play a role in the polarity, proliferation and migration of endothelial cells. The polypeptide is Angiomotin-like protein 2 (Mus musculus (Mouse)).